Consider the following 104-residue polypeptide: Pyrimidine/purine nucleoside phosphorylase (104 aa).

This sequence belongs to the nucleoside phosphorylase PpnP family.

The enzyme catalyses a purine D-ribonucleoside + phosphate = a purine nucleobase + alpha-D-ribose 1-phosphate. The catalysed reaction is adenosine + phosphate = alpha-D-ribose 1-phosphate + adenine. It catalyses the reaction cytidine + phosphate = cytosine + alpha-D-ribose 1-phosphate. It carries out the reaction guanosine + phosphate = alpha-D-ribose 1-phosphate + guanine. The enzyme catalyses inosine + phosphate = alpha-D-ribose 1-phosphate + hypoxanthine. The catalysed reaction is thymidine + phosphate = 2-deoxy-alpha-D-ribose 1-phosphate + thymine. It catalyses the reaction uridine + phosphate = alpha-D-ribose 1-phosphate + uracil. It carries out the reaction xanthosine + phosphate = alpha-D-ribose 1-phosphate + xanthine. Its function is as follows. Catalyzes the phosphorolysis of diverse nucleosides, yielding D-ribose 1-phosphate and the respective free bases. Can use uridine, adenosine, guanosine, cytidine, thymidine, inosine and xanthosine as substrates. Also catalyzes the reverse reactions. The protein is Pyrimidine/purine nucleoside phosphorylase of Geotalea uraniireducens (strain Rf4) (Geobacter uraniireducens).